The chain runs to 1435 residues: Sterol 3-beta-glucosyltransferase (1435 aa).

4 disordered regions span residues 1–26, 75–107, 123–169, and 185–206; these read MAPD…HQVA, SDEE…KFEG, RFSS…KDTP, and PSFE…RTSP. A compositionally biased stretch (polar residues) spans 85-99; the sequence is TRQSSESHINRSSID. Residues 123-133 are compositionally biased toward low complexity; the sequence is RFSSRSKSKSS. The span at 134–143 shows a compositional bias: polar residues; that stretch reads NTIARGSRTP. Positions 189 to 206 are enriched in basic and acidic residues; the sequence is MPRKSKDPAEVDDERTSP. Positions 211–258 constitute a GRAM 1 domain; that stretch reads ERLMEIFKFETPEDVLEEYPCWLMKSVLLQGYMYITTKHICFYAYLPK. The PH domain occupies 262–360; sequence EVVKSGYLSK…WVKALQKIIF (99 aa). Disordered regions lie at residues 444 to 477, 527 to 594, 610 to 671, and 727 to 759; these read LSTA…PNAP, DLNR…QASA, QHSP…QAEI, and GKKH…ATPA. A compositionally biased stretch (basic and acidic residues) spans 527–537; the sequence is DLNRLTTEHHR. Composition is skewed to polar residues over residues 539–554, 628–647, and 657–671; these read NSAN…STNR, KSRS…TRTQ, and TTGS…QAEI. Over residues 729-742 the composition is skewed to basic and acidic residues; it reads KHYEEPHGIPRDNE. Positions 760–826 constitute a GRAM 2 domain; the sequence is DRFRDHFALP…KDIENVDKEK (67 aa). The UDP-alpha-D-glucose site is built by serine 949, arginine 950, aspartate 952, alanine 1252, histidine 1254, histidine 1267, glycine 1271, threonine 1272, aspartate 1291, and glutamine 1292.

The protein belongs to the glycosyltransferase 28 family.

The protein localises to the cytoplasm. Its subcellular location is the preautophagosomal structure membrane. It carries out the reaction a sterol + UDP-alpha-D-glucose = a sterol 3-beta-D-glucoside + UDP + H(+). The enzyme catalyses ergosterol + UDP-alpha-D-glucose = ergosteryl 3-beta-D-glucoside + UDP + H(+). Functionally, sterol glycosyltransferase responsible for the glycosylation of ergosterol to form ergosterol-glucoside. The sequence is that of Sterol 3-beta-glucosyltransferase from Sclerotinia sclerotiorum (strain ATCC 18683 / 1980 / Ss-1) (White mold).